Reading from the N-terminus, the 2382-residue chain is MAPHSTLDSDYSSGSSTPTSASAAGDGFVDGLNGLNNGRAVDPQEPIAIIGMGCRLPGGSHSSSKLWELLKAGRTAQSRFPPSRFNIDGFYHPNSDRPGSLNMEGGYFIEDDIRGFENSFFGINNLEATYMDPQQRKLLEVVFETFENAGFTLDQVSDANIGCYVGNFVTDFITMQLKDSEYTHRYSATGLGTTILANRISHVFNMKGPSFVIDTACSSSLYCLHAAVAALIAGECDSAIVAGANLIQSPEQQLATMKAGVLSKTSTCHTFDSSADGYGRADGIGAILVKRLSDAIRDGDPIRSVIRGTAINSNGKTNGITLPSADGQEAVIRKAYAQAGLGFNETDYIECHGTGTAVGDPIEVEAVSRVFKKPQGAPLLIGSVKSNLGHSEAASGLSSIIKVAMALEKGEIPPTYGVKNINPKIKTDEWNVQIVTETTPWPKNLPHNAGRLFRRAGVNSFGYGGANAHAILEAPQMHVPVGYNRGSLPASLTRSTLFLPFSGSNTAALERRVTDIAAAIDFENVNIADLAYTLGVKRTHLSTRGYILSGQDTLKDDLKPENLRVALQGKTYSKLPLAFVFTGQGAQWPEMGKELMKEFPSFRRTIQRLDAALQMLPHAPTWTLQGAILEPAKTSMINHASRSQPVCTAVQIALVQLLASWGIKPESVIGHSSGEIAAAYTAGYLTPEQSIIIAYYRGHCVTKSTMVGAMMAAGLGAEDANKKISELDLVGKIRVACVNSPESVTISGDTEGIETLRAQFDQAGTFARVLKTDGKAYHSHHMAVIGQEYEDLLTEALDGDDFPTTSNGVRFISSVTDAVVNHAVGPAYWRANLESPVLFANVVERLIKDTASHLVELGPHSALELPIKQTRTKLNISETKVHYGSALSRGKNSITTILNLVGDLFLHGHDISFKGVNYVDSAFNSPKARKNVKTQEKMLLDLPNYTWDYSGTVFNESRVSVEWRNRKYPRHDLLGSQVHGGNGISTNWRNVVKAKDIPWMEGHKLDTTTVFPAAGYLAMAVEAMCQVADVTKEQEPALSLRNVNITKALTLGSEETDAGVELFTTLYPAQLPGGATDAGWYQFNISSYTNGTATTHANGLVKIDSAPAPLEVNLPIVPSTMEPQAPRTWYGKFAKGGLNFQGQFQSLTEIQNPRKKENPHTLAKTELRQGGGSGPSTESEYLIHPITIDALFQAGIIASTSGVVRELRAKVPVHIEEMHLRAPVGGQKELKVNATSEAVGFGTIRVDGELFDDEGRVFLQINRCRQVSYQSGIQQEAGDERHPMLRVVWKPDVTRLGAGDAKEFSQYIEQYAAKSESKVDDATVRLGAALDLLIHKHPRLRILNLDVNLTEFLVDTLRLETDFKKCKTLVSGSYSEDGTLTFEDLTNEGKTSTAAQVFDVVILGSKAQELEAAKELVDENGSIIVNGSPADADKLQTLGFTTLQAPSDTILAQTPQEITAKQQKTLSKQVLIVERNADHVLNSAIAAQAKKITGLEAKRIPLESVTADIIAAHTRVISTIELENPVLSRVTEDEMKHIKTLTDNCTNLVWVTGGRLFQSASPEHAVVYGLSRALMLEQPSLRFFVVDVDHEGTPVERSAKHVVEVLQQALIEADPDYEFVQNAGLLHVSRFVPEETLNRVFREKQGAEKLALPLKDARPFRLGTDMVGQIDSIFFRREEAKDVQLADGHVEVSVKAVGLNTKDLQAINGDGDNTSGSFCTSQYTAVVANVGTGVENLAVGDRVVVMTPGYFATTESVPAWACQKLADNEDFTTLSSVPLQLSTAIYAVNNRAHVQAGESVLVITGSDIAADQAAIRVAQLAGAEVFAVGESTNLPSERVFTKGDKALVAKLLKATEGRGVDVVLNFANDAAPISSIGNVFADCGRLVHVGKSSLAEAIATDSTLFRKSVTVTTFDIANILSLKTVAGQKIRSQLLADSIALYRQGQLNLASSPKVFDVSEVRDAFRALAAKGHSGSVVVSLENEASLVPTLPLKYDTVLSPEKSYLLVGCLGGLGRSMSKWMLARGARKFVFMGRSGTDRAPARRLVEDLELAGAQVTVVRGDVINMEDVELAVNGIDGPIGGVIQAAMGLDEALFTTMPRDYWLTGLKPKIVGSWNLHNAIRGRDSELDFFLMTSSISGSVGTATESNYCSANYFLDVFARHRHSLGLPATSIGLGMISEVGYLHENPEIEAMLLRKGIQAINEDEMLQIIDASLATPTAVPGSYDELARAHVLTGLEPLGLKELRAKGFEGTSPVLGDPRASLLSAALDESTDAASSNAASGMPAEVAEAIATGASVEDAVLKMISKKFSNLVLIPEDKLNLTKPISEVGVDSMLAAEFRAWIFQAFKVDVPYLTLLSAAATLTLLSELITKKMMEAQDA.

The disordered stretch occupies residues 1 to 25 (MAPHSTLDSDYSSGSSTPTSASAAG). Positions 44–474 (QEPIAIIGMG…GANAHAILEA (431 aa)) constitute a Ketosynthase family 3 (KS3) domain. Residues Cys-217, His-352, and His-390 each act as for beta-ketoacyl synthase activity in the active site. The segment at 580–891 (VFTGQGAQWP…HYGSALSRGK (312 aa)) is malonyl-CoA:ACP transacylase (MAT) domain. The active-site For malonyltransferase activity is Ser-672. The N-terminal hotdog fold stretch occupies residues 971 to 1108 (HDLLGSQVHG…GLVKIDSAPA (138 aa)). The segment at 971–1274 (HDLLGSQVHG…RQVSYQSGIQ (304 aa)) is dehydratase (DH) domain. Residues 971 to 1275 (HDLLGSQVHG…QVSYQSGIQQ (305 aa)) form the PKS/mFAS DH domain. His-1003 acts as the Proton acceptor; for dehydratase activity in catalysis. The segment at 1121–1275 (MEPQAPRTWY…QVSYQSGIQQ (155 aa)) is C-terminal hotdog fold. The Proton donor; for dehydratase activity role is filled by Asp-1189. The interval 1668–1979 (GQIDSIFFRR…AKGHSGSVVV (312 aa)) is enoyl reductase (ER) domain. The ketoreductase (KR) domain stretch occupies residues 2004 to 2180 (SYLLVGCLGG…ATSIGLGMIS (177 aa)). Residues 2298 to 2376 (SVEDAVLKMI…LLSELITKKM (79 aa)) form the Carrier domain. The residue at position 2335 (Ser-2335) is an O-(pantetheine 4'-phosphoryl)serine.

Functionally, highly reducing polyketide synthase; part of the gene cluster that mediates the biosynthesis of sordarial, a salicylic aldehyde structurally related to the phytotoxin pyriculol. The most interesting aspect of this pathway is formation of an aromatic product from the highly reducing polyketide synthase srdA. SrdA synthesizes a reduced polyketide chain from one molecule of acetyl-CoA and five molecules of malonyl-CoA. The polyketide chain is then reductively released as an aldehyde. The oxidoreductases srdC, srdD and srdE then oxidize one of the hydroxy groups to facilitate the intramolecular aldol condensation, followed by dehydration to yield a salicylic aldehyde. This aldehyde can undergo facile reduction by endogenous reductases to yield the alcohol 1-hydroxy-2-hydroxymethyl-3-pent-1,3-dienylbenzene. The flavin-dependent srdI counteract against the propensity of the aldehydes to be reduced under physiological conditions and is responsible for reoxidizing 1-hydroxy-2-hydroxymethyl-3-pent-1,3-dienylbenzene back to the salicylic aldehyde. This salicylic aldehyde is then selectively epoxidized by the cupin-domain-containing oxidoreductase srdB to yield the epoxide, which can be hydrolyzed stereoselectively by the hydrolase srdG to give the final product sordarial. This is Highly reducing polyketide synthase srdA from Neurospora crassa (strain ATCC 24698 / 74-OR23-1A / CBS 708.71 / DSM 1257 / FGSC 987).